The sequence spans 121 residues: Prefoldin subunit beta (121 aa).

It belongs to the prefoldin subunit beta family. Heterohexamer of two alpha and four beta subunits.

Its subcellular location is the cytoplasm. Functionally, molecular chaperone capable of stabilizing a range of proteins. Seems to fulfill an ATP-independent, HSP70-like function in archaeal de novo protein folding. In Caldivirga maquilingensis (strain ATCC 700844 / DSM 13496 / JCM 10307 / IC-167), this protein is Prefoldin subunit beta.